The sequence spans 279 residues: Biotin synthase (279 aa).

In terms of domain architecture, Radical SAM core spans 2 to 228 (KTIMLCAISS…NARIMIAGGR (227 aa)). [4Fe-4S] cluster is bound by residues Cys-17, Cys-21, and Cys-24. Cys-61, Cys-96, Cys-154, and Arg-221 together coordinate [2Fe-2S] cluster.

It belongs to the radical SAM superfamily. Biotin synthase family. In terms of assembly, homodimer. [4Fe-4S] cluster serves as cofactor. Requires [2Fe-2S] cluster as cofactor.

It catalyses the reaction (4R,5S)-dethiobiotin + (sulfur carrier)-SH + 2 reduced [2Fe-2S]-[ferredoxin] + 2 S-adenosyl-L-methionine = (sulfur carrier)-H + biotin + 2 5'-deoxyadenosine + 2 L-methionine + 2 oxidized [2Fe-2S]-[ferredoxin]. Its pathway is cofactor biosynthesis; biotin biosynthesis; biotin from 7,8-diaminononanoate: step 2/2. Its function is as follows. Catalyzes the conversion of dethiobiotin (DTB) to biotin by the insertion of a sulfur atom into dethiobiotin via a radical-based mechanism. In Campylobacter curvus (strain 525.92), this protein is Biotin synthase.